Consider the following 196-residue polypeptide: Aequorin-2 (196 aa).

The propeptide occupies 1–7 (MTSKQYS). EF-hand domains follow at residues 18 to 53 (RWIGRHKHMFNFLDVNHNGKISLDEMVYKASDIVIN), 54 to 108 (NLGA…AKNE), 117 to 146 (DALFDIVDKDQNGAITLDEWKAYTKAAGII), and 147 to 182 (QSSEDCEETFRVCDIDESGQLDVDEMTRQHLGFWYT). The Ca(2+) site is built by aspartate 31, asparagine 33, asparagine 35, lysine 37, and glutamate 42. May interact with the chromophore regions lie at residues 47–57 (ASDIVINNLGA), 62–72 (AKRHKDAVEAF), and 107–117 (NEPTLIRIWGD). Ca(2+) is bound by residues aspartate 124, aspartate 126, asparagine 128, glutamate 135, aspartate 160, aspartate 162, serine 164, glutamine 166, and glutamate 171.

It belongs to the aequorin family. In terms of processing, the reduction of the disulfide bond is necessary to regenerate aequorin from apoaequorin.

In terms of biological role, ca(2+)-dependent bioluminescence photoprotein. Displays an emission peak at 470 nm (blue light). Trace amounts of calcium ion trigger the intramolecular oxidation of the chromophore, coelenterazine into coelenteramide and CO(2) with the concomitant emission of light. In Aequorea victoria (Water jellyfish), this protein is Aequorin-2.